The chain runs to 487 residues: UDP-N-acetylmuramoyl-L-alanyl-D-glutamate--2,6-diaminopimelate ligase (487 aa).

Leucine 23 and serine 25 together coordinate UDP-N-acetyl-alpha-D-muramoyl-L-alanyl-D-glutamate. An ATP-binding site is contributed by 108–114 (GTNGKTS). Residues 150–151 (TT), serine 177, glutamine 183, and arginine 185 contribute to the UDP-N-acetyl-alpha-D-muramoyl-L-alanyl-D-glutamate site. Lysine 217 is modified (N6-carboxylysine). Meso-2,6-diaminopimelate is bound by residues arginine 378, 402–405 (DNPR), glycine 453, and glutamate 457. Residues 402–405 (DNPR) carry the Meso-diaminopimelate recognition motif motif.

It belongs to the MurCDEF family. MurE subfamily. Mg(2+) is required as a cofactor. In terms of processing, carboxylation is probably crucial for Mg(2+) binding and, consequently, for the gamma-phosphate positioning of ATP.

Its subcellular location is the cytoplasm. The enzyme catalyses UDP-N-acetyl-alpha-D-muramoyl-L-alanyl-D-glutamate + meso-2,6-diaminopimelate + ATP = UDP-N-acetyl-alpha-D-muramoyl-L-alanyl-gamma-D-glutamyl-meso-2,6-diaminopimelate + ADP + phosphate + H(+). It functions in the pathway cell wall biogenesis; peptidoglycan biosynthesis. Functionally, catalyzes the addition of meso-diaminopimelic acid to the nucleotide precursor UDP-N-acetylmuramoyl-L-alanyl-D-glutamate (UMAG) in the biosynthesis of bacterial cell-wall peptidoglycan. This is UDP-N-acetylmuramoyl-L-alanyl-D-glutamate--2,6-diaminopimelate ligase from Ectopseudomonas mendocina (strain ymp) (Pseudomonas mendocina).